We begin with the raw amino-acid sequence, 354 residues long: Uroporphyrinogen decarboxylase (354 aa).

Substrate is bound by residues 27–31, Asp-77, Tyr-154, Ser-209, and His-327; that span reads RQAGR.

The protein belongs to the uroporphyrinogen decarboxylase family. Homodimer.

The protein localises to the cytoplasm. It catalyses the reaction uroporphyrinogen III + 4 H(+) = coproporphyrinogen III + 4 CO2. The protein operates within porphyrin-containing compound metabolism; protoporphyrin-IX biosynthesis; coproporphyrinogen-III from 5-aminolevulinate: step 4/4. Functionally, catalyzes the decarboxylation of four acetate groups of uroporphyrinogen-III to yield coproporphyrinogen-III. The sequence is that of Uroporphyrinogen decarboxylase from Shewanella loihica (strain ATCC BAA-1088 / PV-4).